The chain runs to 200 residues: Large ribosomal subunit protein bL25 (200 aa).

It belongs to the bacterial ribosomal protein bL25 family. CTC subfamily. As to quaternary structure, part of the 50S ribosomal subunit; part of the 5S rRNA/L5/L18/L25 subcomplex. Contacts the 5S rRNA. Binds to the 5S rRNA independently of L5 and L18.

Functionally, this is one of the proteins that binds to the 5S RNA in the ribosome where it forms part of the central protuberance. The protein is Large ribosomal subunit protein bL25 of Nocardia farcinica (strain IFM 10152).